We begin with the raw amino-acid sequence, 635 residues long: Sodium- and chloride-dependent creatine transporter 1 (635 aa).

The segment at 1-28 (MAKKSAENGIYSVSGDEKKGPLIAPGPD) is disordered. Residues 1–60 (MAKKSAENGIYSVSGDEKKGPLIAPGPDGAPAKGDGPVGLGTPGGRLAVPPRETWTRQMD) are Cytoplasmic-facing. Thr42 bears the Phosphothreonine mark. Residues 61-81 (FIMSCVGFAVGLGNVWRFPYL) form a helical membrane-spanning segment. Over 82–87 (CYKNGG) the chain is Extracellular. Residues 88–108 (GVFLIPYVLIALVGGIPIFFL) form a helical membrane-spanning segment. The Cytoplasmic portion of the chain corresponds to 109-138 (EISLGQFMKAGSINVWNICPLFKGLGYASM). The helical transmembrane segment at 139-159 (VIVFYCNTYYIMVLAWGFYYL) threads the bilayer. Over 160-230 (VKSFTTTLPW…LSGGLEVPGA (71 aa)) the chain is Extracellular. Asn192 and Asn197 each carry an N-linked (GlcNAc...) asparagine glycan. A helical transmembrane segment spans residues 231-251 (LNWEVTLCLLACWVLVYFCVW). Over 252–269 (KGVKSTGKIVYFTATFPY) the chain is Cytoplasmic. A helical transmembrane segment spans residues 270–290 (VVLVVLLVRGVLLPGALDGII). Residues 291 to 304 (YYLKPDWSKLGSPQ) lie on the Extracellular side of the membrane. Residues 305–325 (VWIDAGTQIFFSYAIGLGALT) traverse the membrane as a helical segment. Residues 326 to 341 (ALGSYNRFNNNCYKDA) lie on the Cytoplasmic side of the membrane. A helical transmembrane segment spans residues 342 to 362 (IILALINSGTSFFAGFVVFSI). The Extracellular portion of the chain corresponds to 363–394 (LGFMAAEQGVHISKVAESGPGLAFIAYPRAVT). The chain crosses the membrane as a helical span at residues 395–415 (LMPVAPLWAALFFFMLLLLGL). Topologically, residues 416-444 (DSQFVGVEGFITGLLDLLPASYYFRFQRE) are cytoplasmic. Residues 445–465 (ISVALCCALCFVIDLSMVTDG) form a helical membrane-spanning segment. Topologically, residues 466–479 (GMYVFQLFDYYSAS) are extracellular. Residues 480–500 (GTTLLWQAFWECVVVAWVYGA) traverse the membrane as a helical segment. Topologically, residues 501–520 (DRFMDDIACMIGYRPCPWMK) are cytoplasmic. Residues 521-541 (WCWSFFTPLVCMGIFIFNVVY) traverse the membrane as a helical segment. Topologically, residues 542-560 (YEPLVYNNTYVYPWWGEAM) are extracellular. A glycan (N-linked (GlcNAc...) asparagine) is linked at Asn548. The helical transmembrane segment at 561 to 581 (GWAFALSSMLCVPLHLLGCLL) threads the bilayer. Residues 582-635 (RAKGTMAERWQHLTQPIWGLHHLEYRAQDADVRGLTTLTPVSESSKVVVVESVM) lie on the Cytoplasmic side of the membrane. Residues Thr617 and Thr620 each carry the phosphothreonine modification. At Ser623 the chain carries Phosphoserine.

This sequence belongs to the sodium:neurotransmitter symporter (SNF) (TC 2.A.22) family. SLC6A8 subfamily. Post-translationally, glycosylated. In terms of tissue distribution, predominantly expressed in skeletal muscle and kidney. Also found in brain, heart, colon, testis and prostate.

The protein resides in the cell membrane. The protein localises to the apical cell membrane. The enzyme catalyses creatine(out) + chloride(out) + 2 Na(+)(out) = creatine(in) + chloride(in) + 2 Na(+)(in). Its function is as follows. Creatine:sodium symporter which mediates the uptake of creatine. Plays an important role in supplying creatine to the brain via the blood-brain barrier. In Homo sapiens (Human), this protein is Sodium- and chloride-dependent creatine transporter 1 (SLC6A8).